We begin with the raw amino-acid sequence, 551 residues long: Sialic acid-binding Ig-like lectin 5 (551 aa).

Residues 1-16 (MLPLLLLPLLWGGSLQ) form the signal peptide. Over 17-441 (EKPVYELQVQ…LGTGVVPAAL (425 aa)) the chain is Extracellular. Positions 19–136 (PVYELQVQKS…KYSYQQNKLN (118 aa)) constitute an Ig-like V-type domain. Disulfide bonds link C36-C170, C41-C101, and C164-C213. N100 is a glycosylation site (N-linked (GlcNAc...) asparagine). Residues R119, K127, and S129 each contribute to the N-acetylneuraminate site. Positions 146 to 229 (PDIHFLEPLE…AQVTTERTVQ (84 aa)) constitute an Ig-like C2-type 1 domain. A disordered region spans residues 189–210 (DPETTRSSELTLTPRPEDHGTN). 3 N-linked (GlcNAc...) asparagine glycosylation sites follow: N210, N231, and N253. Residues 236 to 330 (PQTITIFRNG…GFLQIFLNLS (95 aa)) form the Ig-like C2-type 2 domain. C269 and C314 are disulfide-bonded. N-linked (GlcNAc...) asparagine glycans are attached at residues N328, N375, N384, and N393. Residues 442–462 (GGAGVMALLCICLCLIFFLIV) form a helical membrane-spanning segment. Residues 463–551 (KARRKQAAGR…TEYSEIKTSK (89 aa)) lie on the Cytoplasmic side of the membrane. A disordered region spans residues 469–551 (AAGRPEKMDD…TEYSEIKTSK (83 aa)). The short motif at 518–523 (LHYASL) is the ITIM motif element. Residues 528 to 537 (MKSREPKDQE) are compositionally biased toward basic and acidic residues. The SLAM-like motif signature appears at 542–547 (TEYSEI).

Belongs to the immunoglobulin superfamily. SIGLEC (sialic acid binding Ig-like lectin) family. Expressed by monocytic/myeloid lineage cells. Found at high levels in peripheral blood leukocytes, spleen, bone marrow and at lower levels in lymph node, lung, appendix, placenta, pancreas and thymus. Expressed by monocytes and neutrophils but absent from leukemic cell lines representing early stages of myelomonocytic differentiation.

The protein resides in the membrane. In terms of biological role, putative adhesion molecule that mediates sialic-acid dependent binding to cells. Binds equally to alpha-2,3-linked and alpha-2,6-linked sialic acid. The sialic acid recognition site may be masked by cis interactions with sialic acids on the same cell surface. This Homo sapiens (Human) protein is Sialic acid-binding Ig-like lectin 5 (SIGLEC5).